The chain runs to 184 residues: NADH dehydrogenase [ubiquinone] 1 alpha subcomplex assembly factor 3 (184 aa).

It belongs to the NDUFAF3 family. As to quaternary structure, interacts with NDUFAF4, NDUFS2 and NDUFS3.

The protein resides in the nucleus. Its subcellular location is the mitochondrion inner membrane. Functionally, essential factor for the assembly of mitochondrial NADH:ubiquinone oxidoreductase complex (complex I). This is NADH dehydrogenase [ubiquinone] 1 alpha subcomplex assembly factor 3 (NDUFAF3) from Homo sapiens (Human).